We begin with the raw amino-acid sequence, 303 residues long: MAQNVYGPGVRMGNWNEDVYLEEERMRHFLEKREKGELLIQRNRRVKKNILRPMQLSVSEDGYVHYGDKVIIVNPDQVLGEEAGKFMRGDLSLCMSPDEVKAQLSDDLEIPCGVSAVQTIAPMGRNTFTILSDGANSCEMGQVVVYGQNFCLGIAAGLEGKMLYLTSDHRTLLKSSLKSGLQEVTLTDEVTHLNCWQAAFLDPQLRLEYEGFPVRANEKIVIYHRHTNRALAVHRNLFLRTYFGKEMEVVAHTYLDSHKVEKPKNQWMLVTGNPRNKSNTMLDISKPITEDTRALEQAMGINT.

As to quaternary structure, microtubule inner protein component of sperm flagellar doublet microtubules.

It localises to the cytoplasm. It is found in the cytoskeleton. The protein localises to the cilium axoneme. The protein resides in the flagellum axoneme. Microtubule inner protein (MIP) part of the dynein-decorated doublet microtubules (DMTs) in cilia axoneme, which is required for motile cilia beating. This is Cilia- and flagella-associated protein 161 from Mus musculus (Mouse).